The sequence spans 239 residues: Uridylate kinase (239 aa).

10-13 (KLSG) is an ATP binding site. Glycine 53 serves as a coordination point for UMP. Glycine 54 and arginine 58 together coordinate ATP. Residues aspartate 73 and 135-142 (TGRPYFTT) each bind UMP. ATP is bound by residues asparagine 163, tyrosine 169, and aspartate 172.

This sequence belongs to the UMP kinase family. In terms of assembly, homohexamer.

The protein localises to the cytoplasm. The catalysed reaction is UMP + ATP = UDP + ADP. It functions in the pathway pyrimidine metabolism; CTP biosynthesis via de novo pathway; UDP from UMP (UMPK route): step 1/1. With respect to regulation, inhibited by UTP. Functionally, catalyzes the reversible phosphorylation of UMP to UDP. The chain is Uridylate kinase from Mycoplasmopsis synoviae (strain 53) (Mycoplasma synoviae).